A 1214-amino-acid chain; its full sequence is ATP-dependent helicase/nuclease subunit A (1214 aa).

The region spanning 27–483 is the UvrD-like helicase ATP-binding domain; sequence HKRTAQQIEA…ILLKENFRSQ (457 aa). 48–55 is a binding site for ATP; it reads ASAGSGKT. The 289-residue stretch at 512–800 folds into the UvrD-like helicase C-terminal domain; it reads QLVAGSEAQK…NLMTIHKSKG (289 aa).

It belongs to the helicase family. AddA subfamily. In terms of assembly, heterodimer of AddA and AddB/RexB. Mg(2+) serves as cofactor.

The enzyme catalyses Couples ATP hydrolysis with the unwinding of duplex DNA by translocating in the 3'-5' direction.. It carries out the reaction ATP + H2O = ADP + phosphate + H(+). Functionally, the heterodimer acts as both an ATP-dependent DNA helicase and an ATP-dependent, dual-direction single-stranded exonuclease. Recognizes the chi site generating a DNA molecule suitable for the initiation of homologous recombination. The AddA nuclease domain is required for chi fragment generation; this subunit has the helicase and 3' -&gt; 5' nuclease activities. The protein is ATP-dependent helicase/nuclease subunit A of Streptococcus equi subsp. zooepidemicus (strain MGCS10565).